A 63-amino-acid polypeptide reads, in one-letter code: Large ribosomal subunit protein bL28 (63 aa).

Over residues 11-20 the composition is skewed to polar residues; it reads GNNSGASVSH. Positions 11 to 30 are disordered; that stretch reads GNNSGASVSHSNKKTKRKWK. Residues 21 to 30 show a composition bias toward basic residues; it reads SNKKTKRKWK.

It belongs to the bacterial ribosomal protein bL28 family.

The chain is Large ribosomal subunit protein bL28 from Natranaerobius thermophilus (strain ATCC BAA-1301 / DSM 18059 / JW/NM-WN-LF).